Here is a 455-residue protein sequence, read N- to C-terminus: Secreted triacylglycerol lipase LIP4 (455 aa).

Positions 1–19 (MKLNLFILGLLTLAAHAYA) are cleaved as a signal peptide. N-linked (GlcNAc...) asparagine glycosylation occurs at N98. C115 and C284 form a disulfide bridge. The active-site Nucleophile is the S197. A glycan (N-linked (GlcNAc...) asparagine) is linked at N230. Active-site residues include D344 and H378. C360 and C406 are joined by a disulfide.

This sequence belongs to the AB hydrolase superfamily. Lipase family. Class Lip subfamily.

Its subcellular location is the secreted. The protein localises to the cell wall. The enzyme catalyses a triacylglycerol + H2O = a diacylglycerol + a fatty acid + H(+). It carries out the reaction a monoacylglycerol + H2O = glycerol + a fatty acid + H(+). It catalyses the reaction a diacylglycerol + H2O = a monoacylglycerol + a fatty acid + H(+). Functionally, secreted lipase involved in Dandruff and seborrheic dermatitis (D/SD) probably via lipase-mediated breakdown of sebaceous lipids and release of irritating free fatty acids. Has triacylglycerol lipase activity and is able to hydrolyze triolein. Mostly converts monoolein to di- and triolein, while free fatty acids are only produced in low amounts. This Malassezia globosa (strain ATCC MYA-4612 / CBS 7966) (Dandruff-associated fungus) protein is Secreted triacylglycerol lipase LIP4.